Consider the following 438-residue polypeptide: MAQFYTPGRRTATRKILIVTATDLDAFGQGVAREQGKTLFISGLLPGEQAEVILSEEKRHFARGRVTRLISHSPQRVAPRCPHAGVCGGCQQQHAAIALQQQSKSQALQRLMARETGVDIAPQVIAGEPYGYRRRARFGLQFNVKTQRVVLGFRQAASNDLVALKACPVLAPALEALLLPLGECLSALRARRRLGHLELVLADNGPLMVLRHLDPLSLSDREALSAFARQRGLTLYLSDGGAPQRLLGEAPYYQIDGSRLDFNPQDFIQVNAAVNAQMVGQALAWLDVRADERVLDLFCGMGNFTLPLARLALRVVGVEGVPGLVATAQNNARNNGLSNVEFFHQNLEEDVTRQAWASQGFDKILLDPARAGAPGVMQHIVRLAPRRVVYVSCNPTTLARDSQTLLQGGYRLTRLCMLDMFPHTGHLESMALFESAAQ.

A TRAM domain is found at 4-68 (FYTPGRRTAT…RHFARGRVTR (65 aa)). Residues Cys81, Cys87, Cys90, and Cys167 each coordinate [4Fe-4S] cluster. S-adenosyl-L-methionine-binding residues include Gln269, Phe298, Asn303, Glu319, Asn346, and Asp367. Catalysis depends on Cys393, which acts as the Nucleophile.

Belongs to the class I-like SAM-binding methyltransferase superfamily. RNA M5U methyltransferase family. RlmD subfamily.

It catalyses the reaction uridine(1939) in 23S rRNA + S-adenosyl-L-methionine = 5-methyluridine(1939) in 23S rRNA + S-adenosyl-L-homocysteine + H(+). Functionally, catalyzes the formation of 5-methyl-uridine at position 1939 (m5U1939) in 23S rRNA. The polypeptide is 23S rRNA (uracil(1939)-C(5))-methyltransferase RlmD (Edwardsiella ictaluri (strain 93-146)).